We begin with the raw amino-acid sequence, 475 residues long: Aspartyl/glutamyl-tRNA(Asn/Gln) amidotransferase subunit B (475 aa).

This sequence belongs to the GatB/GatE family. GatB subfamily. As to quaternary structure, heterotrimer of A, B and C subunits.

The catalysed reaction is L-glutamyl-tRNA(Gln) + L-glutamine + ATP + H2O = L-glutaminyl-tRNA(Gln) + L-glutamate + ADP + phosphate + H(+). It catalyses the reaction L-aspartyl-tRNA(Asn) + L-glutamine + ATP + H2O = L-asparaginyl-tRNA(Asn) + L-glutamate + ADP + phosphate + 2 H(+). Allows the formation of correctly charged Asn-tRNA(Asn) or Gln-tRNA(Gln) through the transamidation of misacylated Asp-tRNA(Asn) or Glu-tRNA(Gln) in organisms which lack either or both of asparaginyl-tRNA or glutaminyl-tRNA synthetases. The reaction takes place in the presence of glutamine and ATP through an activated phospho-Asp-tRNA(Asn) or phospho-Glu-tRNA(Gln). This chain is Aspartyl/glutamyl-tRNA(Asn/Gln) amidotransferase subunit B, found in Chlorobium luteolum (strain DSM 273 / BCRC 81028 / 2530) (Pelodictyon luteolum).